The following is a 179-amino-acid chain: Large ribosomal subunit protein uL5 (179 aa).

Belongs to the universal ribosomal protein uL5 family. As to quaternary structure, part of the 50S ribosomal subunit; part of the 5S rRNA/L5/L18/L25 subcomplex. Contacts the 5S rRNA and the P site tRNA. Forms a bridge to the 30S subunit in the 70S ribosome.

Its function is as follows. This is one of the proteins that bind and probably mediate the attachment of the 5S RNA into the large ribosomal subunit, where it forms part of the central protuberance. In the 70S ribosome it contacts protein S13 of the 30S subunit (bridge B1b), connecting the 2 subunits; this bridge is implicated in subunit movement. Contacts the P site tRNA; the 5S rRNA and some of its associated proteins might help stabilize positioning of ribosome-bound tRNAs. This chain is Large ribosomal subunit protein uL5, found in Shewanella oneidensis (strain ATCC 700550 / JCM 31522 / CIP 106686 / LMG 19005 / NCIMB 14063 / MR-1).